A 227-amino-acid polypeptide reads, in one-letter code: SPbeta prophage-derived uncharacterized membrane protein YomJ (227 aa).

Helical transmembrane passes span 16–36 (LFFL…IVGL) and 131–151 (GIVA…GLSA).

It is found in the cell membrane. This Bacillus subtilis (strain 168) protein is SPbeta prophage-derived uncharacterized membrane protein YomJ (yomJ).